The following is a 526-amino-acid chain: GMP synthase [glutamine-hydrolyzing] (526 aa).

Positions 4–204 constitute a Glutamine amidotransferase type-1 domain; that stretch reads KIVVLDFGSQ…AHAICGCSGD (201 aa). C87 acts as the Nucleophile in catalysis. Active-site residues include H178 and E180. The GMPS ATP-PPase domain maps to 205-401; it reads WTPASFVEEQ…LDVPDPIVGR (197 aa). Residue 232 to 238 coordinates ATP; that stretch reads SGGVDSS.

As to quaternary structure, homodimer.

The catalysed reaction is XMP + L-glutamine + ATP + H2O = GMP + L-glutamate + AMP + diphosphate + 2 H(+). It participates in purine metabolism; GMP biosynthesis; GMP from XMP (L-Gln route): step 1/1. Catalyzes the synthesis of GMP from XMP. This is GMP synthase [glutamine-hydrolyzing] from Salinibacter ruber (strain DSM 13855 / M31).